Consider the following 904-residue polypeptide: MDQDLDGAERGERGGGSEELLQEEINEGRLTAREALQTWINNGEIHPWVLAGMLSMGVGMLLGVYCQLPDTLIWILMFQLCLYWGLGETSRELDKDSWQWVRSVFIIAILGTLTMAGTALADDDQSTLIPNITKIPTKDTEPGCTYPWILILLILAFILGILGIILVLRRSNSEDILAARDTIDWWLSANQEIPPKFAFPIILISSPLAGIIGYYVMERHLEIFKKGCQICGSLSSMWGMLLEEIGRWLARREWNVSRVMVILLISFSWGMYVNRVNASGSHVAMVTSPPGYRIVNDTSQAPWYCFSSAPIPTCSSSQWGDKYFEEKINETLVKQVYEQAAKHSRATWIEPDLLEEAVYELALLSANDSRQVVVENGTDVCSSQNSSTNKGHPMTLLKLRGQVSETWIGNSSLQFCVQWPYVLVGLNNSDSNISFNSGDWIATNCMHPITLNKSAQDLGKNFPRLTFLDGQLSQLKNTLCGHNTNCLKFGNKSFSTNSLILCQDNPIGNDTFYSLSHSFSKQASARWILVKVPSYGFVVVNDTDTPPSLRIRKPRAVGLAIFLLVLAIMAITSSLVAATTLVNQHTTAKVVERVVQNVSYIAQTQDQFTHLFRNINNRLNVLHHRVSYLEYVEEIRQKQVFFGCKPHGRYCHFDFGPEEVGWNNSWNSKTWNDLQDEYDKIEEKILKIRVDWLNSSLSDTQDTFGLETSIFDHLVQLFDWTSWKDWIKIIIVIIVLWLLIKILLGMLRSCAKVSQNYQHLPAEEEDGDTEPESSPARGDPASGSLYENWLNKIGESKNDAYRVWTEEYNSLRILFATCRWDLLTPQLLQLPFFLLTLLLKLLWDIFRHAPILNLKGWTVGQGGTSGQQQPPDFPYVNWTGSREQNNPEGGLDSGAWYEGLRGSQ.

At methionine 1–tryptophan 726 the chain is on the extracellular side. Asparagine 131, asparagine 255, asparagine 277, asparagine 296, asparagine 329, asparagine 367, asparagine 376, asparagine 385, asparagine 410, asparagine 427, asparagine 432, asparagine 452, asparagine 491, asparagine 509, and asparagine 541 each carry an N-linked (GlcNAc...) asparagine; by host glycan. The segment at alanine 556–valine 576 is fusion peptide. A coiled-coil region spans residues alanine 588–lysine 638. Asparagine 597 carries N-linked (GlcNAc...) asparagine; by host glycosylation. The segment at isoleucine 615–tyrosine 631 is immunosuppression. Asparagine 663 and asparagine 694 each carry an N-linked (GlcNAc...) asparagine; by host glycan. Positions aspartate 676 to aspartate 712 form a coiled coil. Residues isoleucine 727 to leucine 747 traverse the membrane as a helical segment. At arginine 748–glutamine 904 the chain is on the cytoplasmic side. Disordered stretches follow at residues proline 761–glycine 783 and glycine 862–glutamine 904. The span at tryptophan 878–proline 887 shows a compositional bias: polar residues.

In terms of assembly, the mature envelope protein (Env) consists of a trimer of SU-TM heterodimers attached by non-covalent interactions or by a labile interchain disulfide bond. In terms of processing, specific enzymatic cleavages in vivo yield mature proteins. Envelope glycoproteins are synthesized as an inactive precursor that is N-glycosylated and processed likely by host cell furin or by a furin-like protease in the Golgi to yield the mature SU and TM proteins. The cleavage site between SU and TM requires the minimal sequence [KR]-X-[KR]-R.

It localises to the virion membrane. The protein resides in the host cell membrane. Its function is as follows. The surface protein (SU) attaches the virus to the host cell by binding to its receptor. This interaction triggers the refolding of the transmembrane protein (TM) and is thought to activate its fusogenic potential by unmasking its fusion peptide. Fusion occurs at the host cell plasma membrane. In terms of biological role, the transmembrane protein (TM) acts as a class I viral fusion protein. Under the current model, the protein has at least 3 conformational states: pre-fusion native state, pre-hairpin intermediate state, and post-fusion hairpin state. During viral and target cell membrane fusion, the coiled coil regions (heptad repeats) assume a trimer-of-hairpins structure, positioning the fusion peptide in close proximity to the C-terminal region of the ectodomain. The formation of this structure appears to drive apposition and subsequent fusion of viral and target cell membranes. Membranes fusion leads to delivery of the nucleocapsid into the cytoplasm. In Bovine immunodeficiency virus (strain R29) (BIV), this protein is Envelope glycoprotein (env).